The primary structure comprises 141 residues: Large ribosomal subunit protein uL11 (141 aa).

The protein belongs to the universal ribosomal protein uL11 family. In terms of assembly, part of the ribosomal stalk of the 50S ribosomal subunit. Interacts with L10 and the large rRNA to form the base of the stalk. L10 forms an elongated spine to which L12 dimers bind in a sequential fashion forming a multimeric L10(L12)X complex. One or more lysine residues are methylated.

Functionally, forms part of the ribosomal stalk which helps the ribosome interact with GTP-bound translation factors. This is Large ribosomal subunit protein uL11 from Phytoplasma australiense.